We begin with the raw amino-acid sequence, 162 residues long: UPF0114 protein PST_0950 (162 aa).

The next 3 helical transmembrane spans lie at 15–35, 53–73, and 136–156; these read LLAP…IKFF, LVLT…LVMV, and LMWY…MGYM.

Belongs to the UPF0114 family.

It is found in the cell membrane. The chain is UPF0114 protein PST_0950 from Stutzerimonas stutzeri (strain A1501) (Pseudomonas stutzeri).